The following is a 168-amino-acid chain: Phosphopantetheine adenylyltransferase (168 aa).

Position 9 (S9) interacts with substrate. ATP-binding positions include 9–10 (SF) and H17. Residues K41, L73, and R87 each coordinate substrate. ATP is bound by residues 88–90 (GLR), E98, and 123–129 (YAFLSSS).

The protein belongs to the bacterial CoaD family. Homohexamer. Requires Mg(2+) as cofactor.

The protein resides in the cytoplasm. The catalysed reaction is (R)-4'-phosphopantetheine + ATP + H(+) = 3'-dephospho-CoA + diphosphate. It participates in cofactor biosynthesis; coenzyme A biosynthesis; CoA from (R)-pantothenate: step 4/5. Its function is as follows. Reversibly transfers an adenylyl group from ATP to 4'-phosphopantetheine, yielding dephospho-CoA (dPCoA) and pyrophosphate. The polypeptide is Phosphopantetheine adenylyltransferase (Heliobacterium modesticaldum (strain ATCC 51547 / Ice1)).